The sequence spans 300 residues: Porphobilinogen deaminase (300 aa).

Cysteine 239 is modified (S-(dipyrrolylmethanemethyl)cysteine).

The protein belongs to the HMBS family. As to quaternary structure, monomer. Dipyrromethane is required as a cofactor.

It catalyses the reaction 4 porphobilinogen + H2O = hydroxymethylbilane + 4 NH4(+). The protein operates within porphyrin-containing compound metabolism; protoporphyrin-IX biosynthesis; coproporphyrinogen-III from 5-aminolevulinate: step 2/4. Tetrapolymerization of the monopyrrole PBG into the hydroxymethylbilane pre-uroporphyrinogen in several discrete steps. The chain is Porphobilinogen deaminase from Francisella tularensis subsp. holarctica (strain FTNF002-00 / FTA).